We begin with the raw amino-acid sequence, 304 residues long: ATP synthase gamma chain (304 aa).

This sequence belongs to the ATPase gamma chain family. F-type ATPases have 2 components, CF(1) - the catalytic core - and CF(0) - the membrane proton channel. CF(1) has five subunits: alpha(3), beta(3), gamma(1), delta(1), epsilon(1). CF(0) has three main subunits: a, b and c.

Its subcellular location is the cell membrane. Functionally, produces ATP from ADP in the presence of a proton gradient across the membrane. The gamma chain is believed to be important in regulating ATPase activity and the flow of protons through the CF(0) complex. This chain is ATP synthase gamma chain, found in Thermobifida fusca (strain YX).